Here is a 111-residue protein sequence, read N- to C-terminus: Large ribosomal subunit protein uL23 (111 aa).

This sequence belongs to the universal ribosomal protein uL23 family. As to quaternary structure, part of the 50S ribosomal subunit. Contacts protein L29, and trigger factor when it is bound to the ribosome.

Functionally, one of the early assembly proteins it binds 23S rRNA. One of the proteins that surrounds the polypeptide exit tunnel on the outside of the ribosome. Forms the main docking site for trigger factor binding to the ribosome. The sequence is that of Large ribosomal subunit protein uL23 from Chlamydia trachomatis serovar A (strain ATCC VR-571B / DSM 19440 / HAR-13).